Here is a 95-residue protein sequence, read N- to C-terminus: Glutamyl-tRNA(Gln) amidotransferase subunit C (95 aa).

This sequence belongs to the GatC family. In terms of assembly, heterotrimer of A, B and C subunits.

It catalyses the reaction L-glutamyl-tRNA(Gln) + L-glutamine + ATP + H2O = L-glutaminyl-tRNA(Gln) + L-glutamate + ADP + phosphate + H(+). The enzyme catalyses L-aspartyl-tRNA(Asn) + L-glutamine + ATP + H2O = L-asparaginyl-tRNA(Asn) + L-glutamate + ADP + phosphate + 2 H(+). Its function is as follows. Allows the formation of correctly charged Asn-tRNA(Asn) or Gln-tRNA(Gln) through the transamidation of misacylated Asp-tRNA(Asn) or Glu-tRNA(Gln) in organisms which lack either or both of asparaginyl-tRNA or glutaminyl-tRNA synthetases. The reaction takes place in the presence of glutamine and ATP through an activated phospho-Asp-tRNA(Asn) or phospho-Glu-tRNA(Gln). This is Glutamyl-tRNA(Gln) amidotransferase subunit C from Moraxella catarrhalis (Branhamella catarrhalis).